Consider the following 172-residue polypeptide: Male-specific submandibular salivary gland protein (172 aa).

Positions 1–15 (MVKFLLLALALGVSC) are cleaved as a signal peptide. N-linked (GlcNAc...) asparagine glycosylation occurs at Asn-41. 2 cysteine pairs are disulfide-bonded: Cys-60–Cys-64 and Cys-79–Cys-170.

The protein belongs to the calycin superfamily. Lipocalin family. N-glycosylated. In terms of tissue distribution, expressed in acinar cells of the submandibular salivary gland from where it is secreted into saliva (at protein level). Also released from the submandibular salivary gland into blood and excreted in urine (at protein level). Expressed in the lacrimal gland from where it is secreted into tears (at protein level).

Its subcellular location is the secreted. It is found in the cytoplasm. The protein is Male-specific submandibular salivary gland protein of Mesocricetus auratus (Golden hamster).